A 174-amino-acid polypeptide reads, in one-letter code: Methylamine utilization protein MauL (174 aa).

The protein operates within one-carbon metabolism; methylamine degradation. Its function is as follows. Probably involved in TTQ prosthetic group biosynthesis. The protein is Methylamine utilization protein MauL (mauL) of Methylophilus methylotrophus (Bacterium W3A1).